The sequence spans 251 residues: 3-deoxy-manno-octulosonate cytidylyltransferase (251 aa).

This sequence belongs to the KdsB family.

Its subcellular location is the cytoplasm. It catalyses the reaction 3-deoxy-alpha-D-manno-oct-2-ulosonate + CTP = CMP-3-deoxy-beta-D-manno-octulosonate + diphosphate. It functions in the pathway nucleotide-sugar biosynthesis; CMP-3-deoxy-D-manno-octulosonate biosynthesis; CMP-3-deoxy-D-manno-octulosonate from 3-deoxy-D-manno-octulosonate and CTP: step 1/1. The protein operates within bacterial outer membrane biogenesis; lipopolysaccharide biosynthesis. Activates KDO (a required 8-carbon sugar) for incorporation into bacterial lipopolysaccharide in Gram-negative bacteria. The polypeptide is 3-deoxy-manno-octulosonate cytidylyltransferase (Chlorobium luteolum (strain DSM 273 / BCRC 81028 / 2530) (Pelodictyon luteolum)).